Reading from the N-terminus, the 213-residue chain is Thymidylate kinase (213 aa).

11 to 18 provides a ligand contact to ATP; it reads GPDGAGKT.

Belongs to the thymidylate kinase family.

It catalyses the reaction dTMP + ATP = dTDP + ADP. Functionally, phosphorylation of dTMP to form dTDP in both de novo and salvage pathways of dTTP synthesis. The protein is Thymidylate kinase of Oenococcus oeni (strain ATCC BAA-331 / PSU-1).